Here is a 157-residue protein sequence, read N- to C-terminus: Serine-protein kinase RsbW (157 aa).

Belongs to the anti-sigma-factor family.

The enzyme catalyses L-seryl-[protein] + ATP = O-phospho-L-seryl-[protein] + ADP + H(+). It carries out the reaction L-threonyl-[protein] + ATP = O-phospho-L-threonyl-[protein] + ADP + H(+). In terms of biological role, negative regulator of sigma-B activity. Phosphorylates and inactivates its specific antagonist protein, RsbV. Upon phosphorylation of RsbV, RsbW is released and binds to sigma-B, thereby blocking its ability to form an RNA polymerase holoenzyme (E-sigma-B). The protein is Serine-protein kinase RsbW of Listeria innocua serovar 6a (strain ATCC BAA-680 / CLIP 11262).